The sequence spans 128 residues: Cytochrome c-type biogenesis protein CcmE (128 aa).

Residues 1-8 lie on the Cytoplasmic side of the membrane; sequence MQKRVRNR. The helical; Signal-anchor for type II membrane protein transmembrane segment at 9–29 threads the bilayer; that stretch reads LITIIICFCSACLGISIILYN. Residues 30 to 128 lie on the Extracellular side of the membrane; that stretch reads LEKNIVFFLP…KHDENYRPPQ (99 aa). Histidine 120 and tyrosine 124 together coordinate heme.

This sequence belongs to the CcmE/CycJ family.

It localises to the cell membrane. Its function is as follows. Heme chaperone required for the biogenesis of c-type cytochromes. Transiently binds heme delivered by CcmC and transfers the heme to apo-cytochromes in a process facilitated by CcmF and CcmH. The sequence is that of Cytochrome c-type biogenesis protein CcmE from Rickettsia africae (strain ESF-5).